The following is an 81-amino-acid chain: Sulfur carrier protein TusA (81 aa).

Residue Cys-19 is the Cysteine persulfide intermediate of the active site.

Belongs to the sulfur carrier protein TusA family. In terms of assembly, interacts with IscS.

The protein resides in the cytoplasm. It functions in the pathway tRNA modification. In terms of biological role, sulfur carrier protein involved in sulfur trafficking in the cell. Part of a sulfur-relay system required for 2-thiolation during synthesis of 2-thiouridine of the modified wobble base 5-methylaminomethyl-2-thiouridine (mnm(5)s(2)U) in tRNA. Interacts with IscS and stimulates its cysteine desulfurase activity. Accepts an activated sulfur from IscS, which is then transferred to TusD, and thus determines the direction of sulfur flow from IscS to 2-thiouridine formation. Also appears to be involved in sulfur transfer for the biosynthesis of molybdopterin. The sequence is that of Sulfur carrier protein TusA from Klebsiella pneumoniae subsp. pneumoniae (strain ATCC 700721 / MGH 78578).